We begin with the raw amino-acid sequence, 170 residues long: MSLPTGEGFGLNDNILETNVINLAVVVGVVVFFVGKNLTSILENRQETILNNLREADQRASEAREKFNKAKEQLELAEQKAKQIRSEGLLKATTEKNNCLTQYEQDLARLDEYKQETLQFYQQKVFSQLYVSLVSKALQKVKQKFDKRLDNQFHITVNNFFIARFTEYNP.

Residues 15–35 traverse the membrane as a helical segment; the sequence is ILETNVINLAVVVGVVVFFVG.

Belongs to the ATPase B chain family. In terms of assembly, F-type ATPases have 2 components, F(1) - the catalytic core - and F(0) - the membrane proton channel. F(1) has five subunits: alpha(3), beta(3), gamma(1), delta(1), epsilon(1). F(0) has four main subunits: a(1), b(1), b'(1) and c(10-14). The alpha and beta chains form an alternating ring which encloses part of the gamma chain. F(1) is attached to F(0) by a central stalk formed by the gamma and epsilon chains, while a peripheral stalk is formed by the delta, b and b' chains.

It is found in the plastid. Its subcellular location is the chloroplast thylakoid membrane. F(1)F(0) ATP synthase produces ATP from ADP in the presence of a proton or sodium gradient. F-type ATPases consist of two structural domains, F(1) containing the extramembraneous catalytic core and F(0) containing the membrane proton channel, linked together by a central stalk and a peripheral stalk. During catalysis, ATP synthesis in the catalytic domain of F(1) is coupled via a rotary mechanism of the central stalk subunits to proton translocation. In terms of biological role, component of the F(0) channel, it forms part of the peripheral stalk, linking F(1) to F(0). The chain is ATP synthase subunit b, chloroplastic from Stigeoclonium helveticum (Green alga).